The primary structure comprises 667 residues: Serine/threonine-protein kinase BUR1 (667 aa).

Residues 60–378 form the Protein kinase domain; sequence YKEEEKLGQG…AMSAMKHPFF (319 aa). ATP-binding positions include 66 to 74 and K89; that span reads LGQGTFGEV. D207 (proton acceptor) is an active-site residue. The segment at 408–667 is disordered; that stretch reads HEAMSQKGPS…SEQKDIADLY (260 aa). The span at 432–443 shows a compositional bias: basic and acidic residues; the sequence is KFEKKSGIKREQ. Residues 494-516 show a composition bias toward polar residues; the sequence is NNHSGSLRNRITPSNMGTHSNPR. Low complexity predominate over residues 541 to 556; the sequence is YNRGYSSSVNSRYNNR. 3 stretches are compositionally biased toward polar residues: residues 582 to 594, 602 to 611, and 622 to 632; these read DNNQSQTRLQGHS, SKYNSTQTNI, and NEYNASKLGSQ. Residues 633 to 667 are compositionally biased toward basic and acidic residues; it reads DTKKNDYPKHSETQKQQNNEEKKIHSEQKDIADLY.

The protein belongs to the protein kinase superfamily. CMGC Ser/Thr protein kinase family. CDC2/CDKX subfamily.

The protein localises to the nucleus. It carries out the reaction L-seryl-[protein] + ATP = O-phospho-L-seryl-[protein] + ADP + H(+). The catalysed reaction is L-threonyl-[protein] + ATP = O-phospho-L-threonyl-[protein] + ADP + H(+). The enzyme catalyses [DNA-directed RNA polymerase] + ATP = phospho-[DNA-directed RNA polymerase] + ADP + H(+). In terms of biological role, serine/threonine-protein kinase involved in transcription regulation. Phosphorylates the UBC2/RAD6 ubiquitin-conjugating enzyme (E2), leading to monoubiquitination of histone H2B and the silencing of telomeric-associated genes. Also required for histone H3 methylation. Necessary for the recovery from pheromone-induced growth arrest in the cell cycle G1 phase. In Candida glabrata (strain ATCC 2001 / BCRC 20586 / JCM 3761 / NBRC 0622 / NRRL Y-65 / CBS 138) (Yeast), this protein is Serine/threonine-protein kinase BUR1 (BUR1).